A 2148-amino-acid chain; its full sequence is Polyketide synthase 1 (2148 aa).

An N-terminal acylcarrier protein transacylase domain (SAT) region spans residues 19-261 (FIFGDQSSCN…TPLAVHAPYH (243 aa)). Residues 394 to 829 (DSKIAIIGMS…GGNTALLVED (436 aa)) enclose the Ketosynthase family 3 (KS3) domain. Catalysis depends on for beta-ketoacyl synthase activity residues C566, H701, and H745. Residues 929 to 1233 (AFVFSGQGSQ…PSLMRNKDGW (305 aa)) are malonyl-CoA:ACP transacylase (MAT) domain. S1018 serves as the catalytic For acyl/malonyl transferase activity. The segment at 1310 to 1624 (TASVHRIVHE…RKVLNTAMPP (315 aa)) is product template (PT) domain. The interval 1314 to 1447 (HRIVHESVDK…SSLHFEQPKV (134 aa)) is N-terminal hotdog fold. The 306-residue stretch at 1314-1619 (HRIVHESVDK…FQGIPRKVLN (306 aa)) folds into the PKS/mFAS DH domain. H1346 functions as the Proton acceptor; for dehydratase activity in the catalytic mechanism. Residues 1474 to 1619 (LNSRMSSGVI…FQGIPRKVLN (146 aa)) are C-terminal hotdog fold. The active-site Proton donor; for dehydratase activity is the D1533. Residues 1619–1655 (NTAMPPPKSQNEAQVHSSPAKSRPKPPGSASSVHSGR) are disordered. Positions 1627-1638 (SQNEAQVHSSPA) are enriched in polar residues. The region spanning 1678 to 1752 (RDPMQALFKI…DLATHLGFDT (75 aa)) is the Carrier 1 domain. An O-(pantetheine 4'-phosphoryl)serine modification is found at S1712. Residues 1756–1769 (DQSSGQSSSCGGLS) show a composition bias toward low complexity. The disordered stretch occupies residues 1756-1796 (DQSSGQSSSCGGLSPRSDSTGEITSNATTPPSLSPRGSVSG). Over residues 1771 to 1796 (RSDSTGEITSNATTPPSLSPRGSVSG) the composition is skewed to polar residues. In terms of domain architecture, Carrier 2 spans 1793–1870 (SVSGSQCKDV…SFKHMFQQGH (78 aa)). O-(pantetheine 4'-phosphoryl)serine is present on S1830. A thioesterase (TE) domain region spans residues 1882 to 2146 (LKQYRATSTL…ERVAAFIRST (265 aa)). Catalysis depends on S1973, which acts as the For thioesterase activity.

In terms of biological role, polyketide synthase; part of the Pks1 gene cluster that mediates the biosynthesis of an anthraquinone derivative pigment that contributes to conidial pigmentation that provides protection from UV radiation, heat and cold stress. The polyketide synthase Pks1 produces 1-acetyl-2,4,6,8-tetrahydroxy-9,10-anthraquinone though condensation of acetyl-CoA with malonyl-CoA. The dehydratase EthD and the laccase Mlac1 further convert the anthraquinone derivative into the final conidial pigment. The protein is Polyketide synthase 1 of Metarhizium acridum (strain CQMa 102).